We begin with the raw amino-acid sequence, 127 residues long: Protein ApaG (127 aa).

The ApaG domain maps to 3–127 (NNPSSKIEVA…FVLSVPRTLH (125 aa)).

In Xylella fastidiosa (strain M23), this protein is Protein ApaG.